The chain runs to 263 residues: Putative TATA-binding protein pB263R (263 aa).

This sequence belongs to the asfivirus B263R family.

Putative TATA-binding protein. This chain is Putative TATA-binding protein pB263R, found in African swine fever virus (isolate Warthog/Namibia/Wart80/1980) (ASFV).